The sequence spans 278 residues: Envelope glycoprotein L (278 aa).

The signal sequence occupies residues 1-32 (MCRRPDCGFSFSPGPVILLWCCLLLSIVSSAA). Positions 43-256 (VPAECPELTR…DKYYAGLPPE (214 aa)) constitute a gL betaherpesvirus-type domain. Cys154 and Cys159 are disulfide-bonded.

Belongs to the herpesviridae glycoprotein L (gL) family. Betaherpesvirinae gL subfamily. As to quaternary structure, interacts with glycoprotein H (gH); this interaction is necessary for the correct processing and cell surface expression of gH. Forms the envelope pentamer complex (PC) composed of gH, gL, UL128, UL130, and UL131A. The pentamer interacts with host NRP2. Forms the envelope trimer complex composed of gH, gL, and gO. The trimer interacts with host PDGFRA. The trimer also interacts with host EPHA2.

Its subcellular location is the virion membrane. It is found in the host cell membrane. The protein localises to the host Golgi apparatus. The protein resides in the host trans-Golgi network. The heterodimer glycoprotein H-glycoprotein L is required for the fusion of viral and plasma membranes leading to virus entry into the host cell. Acts as a functional inhibitor of gH and maintains gH in an inhibited form. Upon binding to host integrins, gL dissociates from gH leading to activation of the viral fusion glycoproteins gB and gH. In human cytomegalovirus, forms two distincts complexes to mediate viral entry, a trimer and a pentamer at the surface of the virion envelope. The gH-gL-gO trimer is required for infection in fibroblasts by interacting with host PDGFRA, and in glioblastoma cells by interacting with host EPHA2. The gH-gL-UL128-UL130-UL131A pentamer is essential for viral entry in epithelial, endothelial and myeloid cells via interaction with host NRP2. The chain is Envelope glycoprotein L from Human cytomegalovirus (strain 119) (HHV-5).